We begin with the raw amino-acid sequence, 336 residues long: Speedy protein E1 (336 aa).

The interval 16 to 50 (GVDPSPPCRSLGWKRKREWSDESEEEPEKELAPEP) is disordered. Over residues 36 to 50 (DESEEEPEKELAPEP) the composition is skewed to acidic residues.

This sequence belongs to the Speedy/Ringo family. As to expression, predominantly expressed in testis and heart.

This chain is Speedy protein E1, found in Homo sapiens (Human).